The following is a 164-amino-acid chain: Phosphopantetheine adenylyltransferase (164 aa).

Residue Ser9 participates in substrate binding. Residues 9-10 (SF) and His17 contribute to the ATP site. Positions 41, 78, and 92 each coordinate substrate. ATP contacts are provided by residues 93–95 (GLR), Glu103, and 128–134 (SRPITAT).

It belongs to the bacterial CoaD family. Homohexamer. Mg(2+) serves as cofactor.

The protein resides in the cytoplasm. It catalyses the reaction (R)-4'-phosphopantetheine + ATP + H(+) = 3'-dephospho-CoA + diphosphate. The protein operates within cofactor biosynthesis; coenzyme A biosynthesis; CoA from (R)-pantothenate: step 4/5. In terms of biological role, reversibly transfers an adenylyl group from ATP to 4'-phosphopantetheine, yielding dephospho-CoA (dPCoA) and pyrophosphate. The protein is Phosphopantetheine adenylyltransferase of Sinorhizobium fredii (strain NBRC 101917 / NGR234).